Consider the following 641-residue polypeptide: Histone-lysine N-methyltransferase set9 (641 aa).

In terms of domain architecture, SET spans 120-234 (CPFEVTTTNR…IGEEITVSYG (115 aa)). 2 disordered regions span residues 261 to 388 (NLAP…STAA) and 596 to 628 (GVSF…NTRV). Low complexity predominate over residues 348–359 (AGDSGKSSSAGD). Over residues 361-381 (VESSGTDSESLTSITPQESQR) the composition is skewed to polar residues. A compositionally biased stretch (basic and acidic residues) spans 608–625 (SDMRSETPDSEALDERGN).

The protein belongs to the class V-like SAM-binding methyltransferase superfamily. Histone-lysine methyltransferase family. Suvar4-20 subfamily.

The protein localises to the nucleus. Its subcellular location is the chromosome. It catalyses the reaction L-lysyl(20)-[histone H4] + 3 S-adenosyl-L-methionine = N(6),N(6),N(6)-trimethyl-L-lysyl(20)-[histone H4] + 3 S-adenosyl-L-homocysteine + 3 H(+). Its function is as follows. Histone methyltransferase that trimethylates 'Lys-20' of histone H4 to form H4K20me3. This chain is Histone-lysine N-methyltransferase set9 (set9), found in Emericella nidulans (strain FGSC A4 / ATCC 38163 / CBS 112.46 / NRRL 194 / M139) (Aspergillus nidulans).